A 123-amino-acid polypeptide reads, in one-letter code: MADLAKLVDELSALTVLEAAELSKLLEEKWGVSAAAPVAVAAVAAEAAAPVEEKTEFDVILVDAGDKKINVIKEVRAITNLGLKEAKDLVEGAPKPVKEAVSKDEAASIKKKLEEAGAKVELK.

Belongs to the bacterial ribosomal protein bL12 family. Homodimer. Part of the ribosomal stalk of the 50S ribosomal subunit. Forms a multimeric L10(L12)X complex, where L10 forms an elongated spine to which 2 to 4 L12 dimers bind in a sequential fashion. Binds GTP-bound translation factors.

Functionally, forms part of the ribosomal stalk which helps the ribosome interact with GTP-bound translation factors. Is thus essential for accurate translation. This is Large ribosomal subunit protein bL12 from Rhodospirillum rubrum (strain ATCC 11170 / ATH 1.1.1 / DSM 467 / LMG 4362 / NCIMB 8255 / S1).